The sequence spans 43 residues: KKQTGFTPFIGNGFSLDVPXSITEYGPXEKXEDNFDATNNLFV.

The protein belongs to the PsbP family.

It localises to the plastid. The protein resides in the chloroplast thylakoid membrane. May be involved in the regulation of photosystem II. This Physcomitrium patens (Spreading-leaved earth moss) protein is Oxygen-evolving enhancer protein 2.